Here is a 203-residue protein sequence, read N- to C-terminus: MKLRWFAFLVVLLAGCATKRDYENPPWNAKVPVQRAMQWMPISQKAGAAWNVDPQLITAIIAIESGGNPNAVSKSNAVGLMQLKASTSGRDVYRRMGWSGEPTTSELKNPERNISMGAAYLNILETGPLAGIKDPQVLQYALVVSYANGAGALLRTFSSDRKKAITKINDLSADEFFDHVAKNHPAPQAPRYIWKLQRALDEM.

A signal peptide spans 1 to 15 (MKLRWFAFLVVLLAG). A lipid anchor (N-palmitoyl cysteine) is attached at cysteine 16. Cysteine 16 carries the S-diacylglycerol cysteine lipid modification.

Belongs to the transglycosylase Slt family.

The protein localises to the cell outer membrane. The enzyme catalyses Endolytic cleavage of the (1-&gt;4)-beta-glycosidic linkage between N-acetylmuramic acid (MurNAc) and N-acetylglucosamine (GlcNAc) residues in peptidoglycan with concomitant formation of a 1,6-anhydrobond in the MurNAc residue.. In terms of biological role, murein-degrading enzyme. May play a role in recycling of muropeptides during cell elongation and/or cell division. Preferentially cleaves at a distance of more than two disaccharide units from the ends of the glycan chain. The sequence is that of Endo-type membrane-bound lytic murein transglycosylase A from Escherichia fergusonii (strain ATCC 35469 / DSM 13698 / CCUG 18766 / IAM 14443 / JCM 21226 / LMG 7866 / NBRC 102419 / NCTC 12128 / CDC 0568-73).